The primary structure comprises 260 residues: Ava biosynthesis cluster protein M (260 aa).

The signal sequence occupies residues 1 to 15 (MKVLVLGLCRTGTSS).

It belongs to the cytochrome P450 family.

Its pathway is secondary metabolite biosynthesis. Its function is as follows. Part of the cluster that mediates the biosynthesis of a highly modified cyclo-arginine-tryptophan dipeptide (cRW). The first step of the pathway is perfornmed by the arginine-containing cyclodipeptide synthase (RCPDS) avaA that acts as the scaffold-generating enzyme and is responsible for formation of the cyclo-Arg-Trp (cRW) diketopiperazine. AvaB then acts as a multifunctional flavoenzyme that is responsible for generating the cyclo-Arg-formylkynurenine DKP, which can be deformylated by avaC. AvaB then further catalyzes an additional N-oxidation followed by cyclization and dehydration. The next step is an N-acetylation of the guanidine group catalyzed by the arginine N-acetyltransferase avaD. The roles of the additional enzymes identified within the ava cluster still have to be determined. In Aspergillus versicolor, this protein is Ava biosynthesis cluster protein M.